The following is a 214-amino-acid chain: Adenylate kinase (214 aa).

10–15 (GAGKGT) contacts ATP. Residues 30–59 (STGDMLRAAIKAGTELGKQAKAVIDAGQLV) form an NMP region. Residues threonine 31, arginine 36, 57 to 59 (QLV), 85 to 88 (GFPR), and glutamine 92 each bind AMP. Residues 122–159 (GRRAHLPSGRTYHVVYNPPKVEGKDDVTGEDLVVRDDD) are LID. ATP-binding positions include arginine 123 and 132-133 (TY). Residues arginine 156 and arginine 167 each contribute to the AMP site. Lysine 200 is an ATP binding site.

This sequence belongs to the adenylate kinase family. As to quaternary structure, monomer.

It localises to the cytoplasm. The catalysed reaction is AMP + ATP = 2 ADP. It functions in the pathway purine metabolism; AMP biosynthesis via salvage pathway; AMP from ADP: step 1/1. In terms of biological role, catalyzes the reversible transfer of the terminal phosphate group between ATP and AMP. Plays an important role in cellular energy homeostasis and in adenine nucleotide metabolism. In Vibrio campbellii (strain ATCC BAA-1116), this protein is Adenylate kinase.